A 378-amino-acid polypeptide reads, in one-letter code: Erythronate-4-phosphate dehydrogenase (378 aa).

The substrate site is built by Ser-45 and Thr-66. Asp-146 and Thr-175 together coordinate NAD(+). Arg-208 is a catalytic residue. Position 232 (Asp-232) interacts with NAD(+). Glu-237 is a catalytic residue. The Proton donor role is filled by His-254. Residue Gly-257 coordinates NAD(+). Tyr-258 contributes to the substrate binding site.

The protein belongs to the D-isomer specific 2-hydroxyacid dehydrogenase family. PdxB subfamily. Homodimer.

The protein resides in the cytoplasm. The catalysed reaction is 4-phospho-D-erythronate + NAD(+) = (R)-3-hydroxy-2-oxo-4-phosphooxybutanoate + NADH + H(+). The protein operates within cofactor biosynthesis; pyridoxine 5'-phosphate biosynthesis; pyridoxine 5'-phosphate from D-erythrose 4-phosphate: step 2/5. Functionally, catalyzes the oxidation of erythronate-4-phosphate to 3-hydroxy-2-oxo-4-phosphonooxybutanoate. In Escherichia coli O17:K52:H18 (strain UMN026 / ExPEC), this protein is Erythronate-4-phosphate dehydrogenase.